The chain runs to 424 residues: SNF1-related protein kinase regulatory subunit gamma-1 (424 aa).

Ala2 is modified (N-acetylalanine). Ser44 is subject to Phosphoserine. CBS domains are found at residues 63–131 (LSSD…EPPS), 185–244 (TFRW…CAGL), 263–324 (MSKD…YHDY), and 350–408 (IMSG…SGYF).

It belongs to the 5'-AMP-activated protein kinase gamma subunit family. As to quaternary structure, subunit of a probable heterotrimeric complex consisting of an alpha catalytic (KIN10 or KIN11) subunit, and a beta (KINB) and a gamma (KING or SNF4) non-catalytic regulatory subunits. Interacts with HXK1 in mitochondrion. Post-translationally, sumoylated by SIZ1. In terms of tissue distribution, expressed in vegetative organs and, to lower extent, in reproductive organs.

The protein resides in the mitochondrion. Functionally, regulatory subunit of the probable trimeric SNF1-related protein kinase (SnRK) complex, which may play a role in a signal transduction cascade regulating gene expression and carbohydrate metabolism in higher plants. The SnRK complex may also be involved in the regulation of fatty acid synthesis by phosphorylation of acetyl-CoA carboxylase and in assimilation of nitrogen by phosphorylating nitrate reductase. The chain is SNF1-related protein kinase regulatory subunit gamma-1 (KING1) from Arabidopsis thaliana (Mouse-ear cress).